The primary structure comprises 331 residues: Ketol-acid reductoisomerase (NADP(+)) (331 aa).

The 181-residue stretch at 2-182 (AKLFYDSDAD…GGTRAGILET (181 aa)) folds into the KARI N-terminal Rossmann domain. NADP(+) is bound by residues 25-28 (YGSQ), serine 51, serine 53, and 83-86 (DEFQ). The active site involves histidine 108. NADP(+) is bound at residue glycine 134. The KARI C-terminal knotted domain maps to 183-328 (NFKEETETDL…KTLRSMFSWL (146 aa)). Mg(2+)-binding residues include aspartate 191, glutamate 195, glutamate 227, and glutamate 231. Serine 252 contacts substrate.

It belongs to the ketol-acid reductoisomerase family. The cofactor is Mg(2+).

The enzyme catalyses (2R)-2,3-dihydroxy-3-methylbutanoate + NADP(+) = (2S)-2-acetolactate + NADPH + H(+). It catalyses the reaction (2R,3R)-2,3-dihydroxy-3-methylpentanoate + NADP(+) = (S)-2-ethyl-2-hydroxy-3-oxobutanoate + NADPH + H(+). It functions in the pathway amino-acid biosynthesis; L-isoleucine biosynthesis; L-isoleucine from 2-oxobutanoate: step 2/4. The protein operates within amino-acid biosynthesis; L-valine biosynthesis; L-valine from pyruvate: step 2/4. Functionally, involved in the biosynthesis of branched-chain amino acids (BCAA). Catalyzes an alkyl-migration followed by a ketol-acid reduction of (S)-2-acetolactate (S2AL) to yield (R)-2,3-dihydroxy-isovalerate. In the isomerase reaction, S2AL is rearranged via a Mg-dependent methyl migration to produce 3-hydroxy-3-methyl-2-ketobutyrate (HMKB). In the reductase reaction, this 2-ketoacid undergoes a metal-dependent reduction by NADPH to yield (R)-2,3-dihydroxy-isovalerate. The sequence is that of Ketol-acid reductoisomerase (NADP(+)) from Prochlorococcus marinus (strain NATL1A).